The chain runs to 892 residues: Bifunctional uridylyltransferase/uridylyl-removing enzyme (892 aa).

A uridylyltransferase region spans residues 1 to 348 (MPNFTGNTRP…LVDAKVHVRP (348 aa)). The interval 349–710 (INERFQARNG…RIHNQEPGTM (362 aa)) is uridylyl-removing. The HD domain maps to 467–589 (VDEHTLFLIH…VGDERRLNHL (123 aa)). ACT domains follow at residues 711–786 (EVFI…LTQP) and 822–892 (VMEL…YLER).

The protein belongs to the GlnD family. Requires Mg(2+) as cofactor.

It catalyses the reaction [protein-PII]-L-tyrosine + UTP = [protein-PII]-uridylyl-L-tyrosine + diphosphate. The catalysed reaction is [protein-PII]-uridylyl-L-tyrosine + H2O = [protein-PII]-L-tyrosine + UMP + H(+). With respect to regulation, uridylyltransferase (UTase) activity is inhibited by glutamine, while glutamine activates uridylyl-removing (UR) activity. Modifies, by uridylylation and deuridylylation, the PII regulatory proteins (GlnB and homologs), in response to the nitrogen status of the cell that GlnD senses through the glutamine level. Under low glutamine levels, catalyzes the conversion of the PII proteins and UTP to PII-UMP and PPi, while under higher glutamine levels, GlnD hydrolyzes PII-UMP to PII and UMP (deuridylylation). Thus, controls uridylylation state and activity of the PII proteins, and plays an important role in the regulation of nitrogen assimilation and metabolism. This Nitrosococcus oceani (strain ATCC 19707 / BCRC 17464 / JCM 30415 / NCIMB 11848 / C-107) protein is Bifunctional uridylyltransferase/uridylyl-removing enzyme.